Reading from the N-terminus, the 98-residue chain is Putative protein adenylyltransferase MJ0126 (98 aa).

The short motif at 31 to 45 is the GSX(10)DXD motif element; sequence GSYARNEQTETSDID. The Mg(2+) site is built by aspartate 43, aspartate 45, and aspartate 75.

Belongs to the MntA antitoxin family. Probably forms a complex with cognate toxin MJ0125. It depends on Mg(2+) as a cofactor.

The catalysed reaction is L-tyrosyl-[protein] + ATP = O-(5'-adenylyl)-L-tyrosyl-[protein] + diphosphate. It carries out the reaction O-(5'-adenylyl)-L-tyrosyl-[protein] + ATP = O-[5'-(adenylyl-(5'-&gt;3')-adenylyl)]-L-tyrosyl-[protein] + diphosphate. In terms of biological role, probable antitoxin component of a putative type VII toxin-antitoxin (TA) system. Neutralizes cognate toxic MJ0125 by di-AMPylation. In Methanocaldococcus jannaschii (strain ATCC 43067 / DSM 2661 / JAL-1 / JCM 10045 / NBRC 100440) (Methanococcus jannaschii), this protein is Putative protein adenylyltransferase MJ0126.